Here is a 989-residue protein sequence, read N- to C-terminus: Phosphoenolpyruvate carboxylase (989 aa).

Catalysis depends on residues His-175 and Lys-630.

This sequence belongs to the PEPCase type 1 family. Requires Mg(2+) as cofactor.

It catalyses the reaction oxaloacetate + phosphate = phosphoenolpyruvate + hydrogencarbonate. Forms oxaloacetate, a four-carbon dicarboxylic acid source for the tricarboxylic acid cycle. The chain is Phosphoenolpyruvate carboxylase from Prochlorococcus marinus (strain AS9601).